Reading from the N-terminus, the 363-residue chain is MSRPQFDPSAYAAQLEDKKSRLAGLLAPFAAPAPEVFESPREHYRLRAEFRLWRETGNEKRHYAMFEQGDKHTPILIEDFPIASRRINELMPRLKAAWADPALGFKLFQVEFLTTLAGDALITLCYHRPIDDAWRQAAEKLAAELGVNLVGRSRGKRIVVGRDYVEEELSVAGRRFRYRQPEGAFTQPNGEVNQKMLGWAYEALGQRDDDLLELYCGNGNFTLPLATRVRKVLATEISKSSVNAALANLADNAVDNVSLVRLSAEELTQALNEVRPFRRLADIDLKSYAFGSVFVDPPRAGMDPDTCELARRFERILYISCNPETLAQNIAQLHDTHRISRCALFDQFPYTHHMESGVLLERR.

Residues Gln-187, Tyr-215, Asn-220, Glu-236, and Asp-296 each coordinate S-adenosyl-L-methionine. Cys-321 (nucleophile) is an active-site residue. Glu-355 functions as the Proton acceptor in the catalytic mechanism.

Belongs to the class I-like SAM-binding methyltransferase superfamily. RNA M5U methyltransferase family. TrmA subfamily.

It carries out the reaction uridine(54) in tRNA + S-adenosyl-L-methionine = 5-methyluridine(54) in tRNA + S-adenosyl-L-homocysteine + H(+). The catalysed reaction is uridine(341) in tmRNA + S-adenosyl-L-methionine = 5-methyluridine(341) in tmRNA + S-adenosyl-L-homocysteine + H(+). Dual-specificity methyltransferase that catalyzes the formation of 5-methyluridine at position 54 (m5U54) in all tRNAs, and that of position 341 (m5U341) in tmRNA (transfer-mRNA). This is tRNA/tmRNA (uracil-C(5))-methyltransferase from Pseudomonas aeruginosa (strain LESB58).